The chain runs to 956 residues: Protein translocase subunit SecA (956 aa).

Residues Q87, 105–109 (GEGKT), and D524 contribute to the ATP site. Zn(2+) is bound by residues C940, C942, C951, and H952.

This sequence belongs to the SecA family. As to quaternary structure, monomer and homodimer. Part of the essential Sec protein translocation apparatus which comprises SecA, SecYEG and auxiliary proteins SecDF-YajC and YidC. Requires Zn(2+) as cofactor.

Its subcellular location is the cell inner membrane. The protein localises to the cytoplasm. It carries out the reaction ATP + H2O + cellular proteinSide 1 = ADP + phosphate + cellular proteinSide 2.. In terms of biological role, part of the Sec protein translocase complex. Interacts with the SecYEG preprotein conducting channel. Has a central role in coupling the hydrolysis of ATP to the transfer of proteins into and across the cell membrane, serving both as a receptor for the preprotein-SecB complex and as an ATP-driven molecular motor driving the stepwise translocation of polypeptide chains across the membrane. The sequence is that of Protein translocase subunit SecA from Beijerinckia indica subsp. indica (strain ATCC 9039 / DSM 1715 / NCIMB 8712).